The primary structure comprises 156 residues: uncharacterized protein (156 aa).

This is an uncharacterized protein from Escherichia coli (strain K12).